A 132-amino-acid polypeptide reads, in one-letter code: Small ribosomal subunit protein uS8 (132 aa).

Belongs to the universal ribosomal protein uS8 family. Part of the 30S ribosomal subunit. Contacts proteins S5 and S12.

In terms of biological role, one of the primary rRNA binding proteins, it binds directly to 16S rRNA central domain where it helps coordinate assembly of the platform of the 30S subunit. This chain is Small ribosomal subunit protein uS8, found in Brevibacillus brevis (strain 47 / JCM 6285 / NBRC 100599).